We begin with the raw amino-acid sequence, 430 residues long: Glutamate-1-semialdehyde 2,1-aminomutase (430 aa).

N6-(pyridoxal phosphate)lysine is present on Lys-267.

This sequence belongs to the class-III pyridoxal-phosphate-dependent aminotransferase family. HemL subfamily. Homodimer. It depends on pyridoxal 5'-phosphate as a cofactor.

Its subcellular location is the cytoplasm. It carries out the reaction (S)-4-amino-5-oxopentanoate = 5-aminolevulinate. The protein operates within porphyrin-containing compound metabolism; protoporphyrin-IX biosynthesis; 5-aminolevulinate from L-glutamyl-tRNA(Glu): step 2/2. This chain is Glutamate-1-semialdehyde 2,1-aminomutase, found in Anaeromyxobacter sp. (strain K).